A 258-amino-acid polypeptide reads, in one-letter code: Acyl-[acyl-carrier-protein]--UDP-N-acetylglucosamine O-acyltransferase (258 aa).

This sequence belongs to the transferase hexapeptide repeat family. LpxA subfamily. As to quaternary structure, homotrimer.

It is found in the cytoplasm. It catalyses the reaction a (3R)-hydroxyacyl-[ACP] + UDP-N-acetyl-alpha-D-glucosamine = a UDP-3-O-[(3R)-3-hydroxyacyl]-N-acetyl-alpha-D-glucosamine + holo-[ACP]. It functions in the pathway glycolipid biosynthesis; lipid IV(A) biosynthesis; lipid IV(A) from (3R)-3-hydroxytetradecanoyl-[acyl-carrier-protein] and UDP-N-acetyl-alpha-D-glucosamine: step 1/6. Its function is as follows. Involved in the biosynthesis of lipid A, a phosphorylated glycolipid that anchors the lipopolysaccharide to the outer membrane of the cell. The sequence is that of Acyl-[acyl-carrier-protein]--UDP-N-acetylglucosamine O-acyltransferase from Syntrophobacter fumaroxidans (strain DSM 10017 / MPOB).